The following is a 563-amino-acid chain: Tripeptidyl-peptidase 1 (563 aa).

The N-terminal stretch at 1-19 (MGLQARFLGLLALVIAGKC) is a signal peptide. Residues 20 to 195 (THSPEPDQRW…PEPQGVGPVG (176 aa)) constitute a propeptide, removed in mature form. A disulfide bridge links C111 with C122. The 365-residue stretch at 199 to 563 (GVTPSVLRQR…PALLKTLLNP (365 aa)) folds into the Peptidase S53 domain. N-linked (GlcNAc...) asparagine glycans are attached at residues N210 and N222. Catalysis depends on charge relay system residues E272 and D276. N286, N313, and N443 each carry an N-linked (GlcNAc...) asparagine glycan. Intrachain disulfides connect C365/C526 and C522/C537. S475 acts as the Charge relay system in catalysis. D517 and V518 together coordinate Ca(2+). Ca(2+) contacts are provided by G539, G541, and D543.

As to quaternary structure, monomer. Interacts with CLN5. Interacts with CLN3. It depends on Ca(2+) as a cofactor. Activated by autocatalytic proteolytical processing upon acidification. N-glycosylation is required for processing and activity.

The protein resides in the lysosome. Its subcellular location is the melanosome. It catalyses the reaction Release of an N-terminal tripeptide from a polypeptide, but also has endopeptidase activity.. Lysosomal serine protease with tripeptidyl-peptidase I activity. May act as a non-specific lysosomal peptidase which generates tripeptides from the breakdown products produced by lysosomal proteinases. Requires substrates with an unsubstituted N-terminus. The protein is Tripeptidyl-peptidase 1 (Tpp1) of Rattus norvegicus (Rat).